A 201-amino-acid polypeptide reads, in one-letter code: 3-isopropylmalate dehydratase small subunit (201 aa).

Belongs to the LeuD family. LeuD type 1 subfamily. Heterodimer of LeuC and LeuD.

It catalyses the reaction (2R,3S)-3-isopropylmalate = (2S)-2-isopropylmalate. Its pathway is amino-acid biosynthesis; L-leucine biosynthesis; L-leucine from 3-methyl-2-oxobutanoate: step 2/4. In terms of biological role, catalyzes the isomerization between 2-isopropylmalate and 3-isopropylmalate, via the formation of 2-isopropylmaleate. The chain is 3-isopropylmalate dehydratase small subunit from Methylorubrum extorquens (strain ATCC 14718 / DSM 1338 / JCM 2805 / NCIMB 9133 / AM1) (Methylobacterium extorquens).